The sequence spans 673 residues: Probable multidrug resistance ABC transporter ATP-binding/permease protein YheH (673 aa).

5 helical membrane passes run 18 to 38 (LITAVLLLTVAVGAELTGPFI), 146 to 166 (IKGMVLLICLYGGLLVFSVFF), 223 to 243 (LYVTVLSTFVTSGIYMFGIFT), 245 to 265 (LFLLDVKLAFVCLAIVPIIWL), and 347 to 367 (LAFVCLIWHFGGASLNAAGIV). The ABC transmembrane type-1 domain occupies 18–398 (LITAVLLLTV…IVNQFSKLEL (381 aa)). The ABC transporter domain occupies 430-664 (VEFRDVSFAY…EGQYYQMYEL (235 aa)). 463–470 (GHTGSGKS) contributes to the ATP binding site.

The protein belongs to the ABC transporter superfamily. As to quaternary structure, heterodimer composed of YheH and YheI.

Its subcellular location is the cell membrane. Its activity is regulated as follows. Inhibited by ortho-vanadate. Involved in the transport of four structurally unrelated drugs, including doxorubicin and mitoxantrone. Transmembrane domains (TMD) form a pore in the membrane and the ATP-binding domain (NBD) is responsible for energy generation. This chain is Probable multidrug resistance ABC transporter ATP-binding/permease protein YheH (yheH), found in Bacillus subtilis (strain 168).